The primary structure comprises 247 residues: Eukaryotic translation initiation factor 6 (247 aa).

A phosphoserine; by CK1 mark is found at S174 and S175.

It belongs to the eIF-6 family. In terms of assembly, monomer. Associates with the 60S ribosomal subunit. Phosphorylation at Ser-174 and Ser-175 promotes nuclear export.

Its subcellular location is the cytoplasm. The protein localises to the nucleus. It is found in the nucleolus. Its function is as follows. Binds to the 60S ribosomal subunit and prevents its association with the 40S ribosomal subunit to form the 80S initiation complex in the cytoplasm. Is also involved in ribosome biogenesis. Associates with pre-60S subunits in the nucleus and is involved in its nuclear export. This is Eukaryotic translation initiation factor 6 (tif6) from Emericella nidulans (strain FGSC A4 / ATCC 38163 / CBS 112.46 / NRRL 194 / M139) (Aspergillus nidulans).